The primary structure comprises 150 residues: Probable histone H2A.7 (150 aa).

Basic residues predominate over residues 1-12; that stretch reads MESTGKVKKAFG. Disordered regions lie at residues 1–27 and 129–150; these read MEST…SVSK and KSAT…PKKA. Ser146 carries the phosphoserine modification. An SPKK motif motif is present at residues 146–149; the sequence is SPKK.

Belongs to the histone H2A family. The nucleosome is a histone octamer containing two molecules each of H2A, H2B, H3 and H4 assembled in one H3-H4 heterotetramer and two H2A-H2B heterodimers. The octamer wraps approximately 147 bp of DNA. Post-translationally, not ubiquitinated. As to expression, strong expression through-out the roots and leaves. Also found in meristems and dividing cells.

The protein localises to the nucleus. The protein resides in the chromosome. In terms of biological role, core component of nucleosome. Nucleosomes wrap and compact DNA into chromatin, limiting DNA accessibility to the cellular machineries which require DNA as a template. Histones thereby play a central role in transcription regulation, DNA repair, DNA replication and chromosomal stability. DNA accessibility is regulated via a complex set of post-translational modifications of histones, also called histone code, and nucleosome remodeling. This Arabidopsis thaliana (Mouse-ear cress) protein is Probable histone H2A.7.